Consider the following 415-residue polypeptide: Methylthioribose-1-phosphate isomerase (415 aa).

Catalysis depends on D284, which acts as the Proton donor.

It belongs to the eIF-2B alpha/beta/delta subunits family. MtnA subfamily.

It localises to the cytoplasm. Its subcellular location is the nucleus. It carries out the reaction 5-(methylsulfanyl)-alpha-D-ribose 1-phosphate = 5-(methylsulfanyl)-D-ribulose 1-phosphate. Its pathway is amino-acid biosynthesis; L-methionine biosynthesis via salvage pathway; L-methionine from S-methyl-5-thio-alpha-D-ribose 1-phosphate: step 1/6. Catalyzes the interconversion of methylthioribose-1-phosphate (MTR-1-P) into methylthioribulose-1-phosphate (MTRu-1-P). In Vanderwaltozyma polyspora (strain ATCC 22028 / DSM 70294 / BCRC 21397 / CBS 2163 / NBRC 10782 / NRRL Y-8283 / UCD 57-17) (Kluyveromyces polysporus), this protein is Methylthioribose-1-phosphate isomerase.